Here is a 464-residue protein sequence, read N- to C-terminus: Mitogen-activated protein kinase 10 (464 aa).

The 296-residue stretch at 64–359 (YQNLKPIGSG…VDDALQHPYI (296 aa)) folds into the Protein kinase domain. Residues 70-78 (IGSGAQGIV) and K93 each bind ATP. The active-site Proton acceptor is the D189. The residue at position 221 (T221) is a Phosphothreonine; by MAP2K7. The TXY signature appears at 221–223 (TPY). The residue at position 223 (Y223) is a Phosphotyrosine; by MAP2K4. The disordered stretch occupies residues 405 to 464 (TKNGVVKSQPSPSGAAVNSSESLPPSSAVNDISSMSTDQTLASDTDSSLEASAGPLGCCR). Over residues 410–454 (VKSQPSPSGAAVNSSESLPPSSAVNDISSMSTDQTLASDTDSSLE) the composition is skewed to polar residues. Residues C462 and C463 are each lipidated (S-palmitoyl cysteine).

This sequence belongs to the protein kinase superfamily. CMGC Ser/Thr protein kinase family. MAP kinase subfamily. As to quaternary structure, interacts with MAPK8IP1/JIP-1, MAPK8IP3/JIP-3/JSAP1 and SPAG9/MAPK8IP4/JIP4. Interacts with HDAC9 and MAPKBP1. Interacts with ARRB2; the interaction enhances MAPK10 activation by MAP3K5. Interacts with SARM1. Interacts with JUND; interaction is inhibited in the presence of MEN1. Mg(2+) serves as cofactor. In terms of processing, dually phosphorylated on Thr-221 and Tyr-223 by MAP2K4 and MAP2K7, which activates the enzyme. MAP2K7 shows a strong preference for Thr-221 while MAP2K4 phosphorylates Tyr-223 preferentially. Weakly autophosphorylated on threonine and tyrosine residues in vitro. Post-translationally, palmitoylation regulates subcellular location and axonal development. In terms of tissue distribution, brain (at protein level). Expressed specifically in neurons of the hippocampus, cortex, cerebellum, brainstem, and spinal cord. Seems to be also found in testis, and very weakly in the heart.

It localises to the cytoplasm. The protein localises to the membrane. Its subcellular location is the nucleus. It is found in the mitochondrion. It catalyses the reaction L-seryl-[protein] + ATP = O-phospho-L-seryl-[protein] + ADP + H(+). It carries out the reaction L-threonyl-[protein] + ATP = O-phospho-L-threonyl-[protein] + ADP + H(+). With respect to regulation, activated by threonine and tyrosine phosphorylation by two dual specificity kinases, MAP2K4 and MAP2K7. MAP2K7 phosphorylates MAPK10 on Thr-221 causing a conformational change and a large increase in Vmax for the enzyme. MAP2K4 then phosphorylates Tyr-223 resulting in a further increase in Vmax. Inhibited by dual specificity phosphatases, such as DUSP1. Inhibited by HDAC9. Its function is as follows. Serine/threonine-protein kinase involved in various processes such as neuronal proliferation, differentiation, migration and programmed cell death. Extracellular stimuli such as pro-inflammatory cytokines or physical stress stimulate the stress-activated protein kinase/c-Jun N-terminal kinase (SAP/JNK) signaling pathway. In this cascade, two dual specificity kinases MAP2K4/MKK4 and MAP2K7/MKK7 phosphorylate and activate MAPK10/JNK3. In turn, MAPK10/JNK3 phosphorylates a number of transcription factors, primarily components of AP-1 such as JUN and ATF2 and thus regulates AP-1 transcriptional activity. Plays regulatory roles in the signaling pathways during neuronal apoptosis. Phosphorylates the neuronal microtubule regulator STMN2. Acts in the regulation of the amyloid-beta precursor protein/APP signaling during neuronal differentiation by phosphorylating APP. Also participates in neurite growth in spiral ganglion neurons. Phosphorylates the CLOCK-BMAL1 heterodimer and plays a role in the photic regulation of the circadian clock. Phosphorylates JUND and this phosphorylation is inhibited in the presence of MEN1. This Mus musculus (Mouse) protein is Mitogen-activated protein kinase 10 (Mapk10).